The primary structure comprises 284 residues: Acetyl-coenzyme A carboxylase carboxyl transferase subunit beta (284 aa).

In terms of domain architecture, CoA carboxyltransferase N-terminal spans 25–284 (LWTKCPKCES…ICRMLLQKSA (260 aa)). Positions 29, 32, 48, and 51 each coordinate Zn(2+). Residues 29–51 (CPKCESTLYRAEVRRNLEVCPKC) form a C4-type zinc finger.

Belongs to the AccD/PCCB family. In terms of assembly, acetyl-CoA carboxylase is a heterohexamer composed of biotin carboxyl carrier protein (AccB), biotin carboxylase (AccC) and two subunits each of ACCase subunit alpha (AccA) and ACCase subunit beta (AccD). Requires Zn(2+) as cofactor.

It localises to the cytoplasm. The enzyme catalyses N(6)-carboxybiotinyl-L-lysyl-[protein] + acetyl-CoA = N(6)-biotinyl-L-lysyl-[protein] + malonyl-CoA. It functions in the pathway lipid metabolism; malonyl-CoA biosynthesis; malonyl-CoA from acetyl-CoA: step 1/1. Functionally, component of the acetyl coenzyme A carboxylase (ACC) complex. Biotin carboxylase (BC) catalyzes the carboxylation of biotin on its carrier protein (BCCP) and then the CO(2) group is transferred by the transcarboxylase to acetyl-CoA to form malonyl-CoA. This Hydrogenovibrio crunogenus (strain DSM 25203 / XCL-2) (Thiomicrospira crunogena) protein is Acetyl-coenzyme A carboxylase carboxyl transferase subunit beta.